The chain runs to 774 residues: Cilium assembly protein DZIP1L (774 aa).

The segment at 166–189 (HTCHLCDKTFMNATFLRGHIQRRH) adopts a C2H2-type zinc-finger fold. Positions 204–450 (LGEVLEELRA…RKVLAALRKN (247 aa)) form a coiled coil. Disordered regions lie at residues 415–435 (MPKAVATEEDSSEEELEASLE), 515–674 (NKEV…ASSG), and 686–774 (KQLE…IPGW). Over residues 421–433 (TEEDSSEEELEAS) the composition is skewed to acidic residues. 2 positions are modified to phosphoserine: S425 and S426. Residues 515-526 (NKEVSSRVKQRW) show a composition bias toward basic and acidic residues. Low complexity predominate over residues 597–616 (GPSSTPVSPGSGLSSTPPFS).

It belongs to the DZIP C2H2-type zinc-finger protein family. Interacts with SEPTIN2.

It localises to the cytoplasm. It is found in the cytoskeleton. The protein resides in the cilium basal body. The protein localises to the microtubule organizing center. Its subcellular location is the centrosome. It localises to the centriole. In terms of biological role, involved in primary cilium formation. Probably acts as a transition zone protein required for localization of PKD1/PC1 and PKD2/PC2 to the ciliary membrane. The chain is Cilium assembly protein DZIP1L from Mus musculus (Mouse).